A 512-amino-acid polypeptide reads, in one-letter code: Transactivator/viroplasmin protein (512 aa).

Disordered stretches follow at residues 76–123 (GNER…NPVA) and 474–512 (ADSSSTSGEQNNVEKSCPDSPLTNAYDERSDDHKRIPSI). Residues 476 to 487 (SSSTSGEQNNVE) are compositionally biased toward polar residues. Residues 499-512 (YDERSDDHKRIPSI) show a composition bias toward basic and acidic residues.

The protein belongs to the caulimoviridae viroplasmin family.

Its subcellular location is the host cytoplasm. Enhances the translation of downstream ORFs on polycistronic mRNAs derived from figwort mosaic virus. The sequence is that of Transactivator/viroplasmin protein from Figwort mosaic virus (strain DxS) (FMV).